Here is a 21-residue protein sequence, read N- to C-terminus: Cupiennin-6c (21 aa).

Ser21 carries the serine amide modification.

Expressed by the venom gland.

It localises to the secreted. The chain is Cupiennin-6c from Cupiennius salei (American wandering spider).